The sequence spans 535 residues: RAN GTPase-activating protein 1 (535 aa).

Residues 1 to 115 (MDHSAKTTQN…EESEVEVSKD (115 aa)) are WPP. 9 LRR repeats span residues 208 to 231 (GSKLRYLNLSDNALGEKGIRAFAS), 236 to 259 (QHDLEELYLMNDGISEDAARAVRE), 264 to 287 (TDKIRVLQFHNNMTGDEGATAIAE), 320 to 343 (CSHLKKLDLRDNMFGVEGGIALAK), 353 to 376 (EIYMSYLNLEDEGTEALSEALLKS), 377 to 400 (APSLEVLELAGNDITVKSTGNLAA), 405 to 428 (KQSLAKLNLSENELKDEGTILIAK), 433 to 456 (HDQLVEVDLSTNMIRRAGARALAQ), and 461 to 488 (KNTFKLLNINGNFISEEGIDEVNDMFKD). The interval 493 to 535 (LVPLDDNDPEGEDFEDEDEEEEGEDGNELESKLGSLKIKQGEE) is disordered. Acidic residues predominate over residues 497-520 (DDNDPEGEDFEDEDEEEEGEDGNE).

The protein belongs to the RNA1 family. Homodimer. Interacts with WIP1 through its WPP domain. Component of Ran complexes at least composed of WIT1 or WIT2, RANGAP1 or RANGAP2, and WIP1 or WIP2 or WIP3. Interacts directly with WIT1, WIP2 and WIP3. Interacts with POK1.

Its subcellular location is the cytoplasm. The protein resides in the nucleus envelope. It is found in the nucleus membrane. It localises to the cytoskeleton. The protein localises to the spindle. Its subcellular location is the phragmoplast. In terms of biological role, GTPase activator for the nuclear Ras-related regulatory protein Ran, converting it to the putatively inactive GDP-bound state. Plays a role in spatial signaling during cell division. The protein is RAN GTPase-activating protein 1 (RANGAP1) of Arabidopsis thaliana (Mouse-ear cress).